The sequence spans 332 residues: D-galactose/methyl-galactoside binding periplasmic protein MglB (332 aa).

The N-terminal stretch at 1–23 is a signal peptide; the sequence is MNKKVLTLSAVMASLLFGAHAHA. The beta-D-galactose site is built by Asp-37 and Asn-114. Beta-D-glucose is bound by residues Asp-37 and Asn-114. Ca(2+)-binding residues include Asp-157, Asn-159, Asp-161, Lys-163, and Gln-165. Beta-D-galactose contacts are provided by His-175, Asp-177, and Arg-181. Beta-D-glucose is bound by residues His-175, Asp-177, and Arg-181. Glu-228 lines the Ca(2+) pocket. Positions 234, 259, and 279 each coordinate beta-D-galactose. Beta-D-glucose is bound by residues Asn-234, Asp-259, and Asn-279.

The protein belongs to the bacterial solute-binding protein 2 family. The ABC transporter complex is composed of one ATP-binding protein (MglA), two transmembrane proteins (MglC) and a solute-binding protein (MglB).

It is found in the periplasm. In terms of biological role, part of the ABC transporter complex MglABC involved in galactose/methyl galactoside import. In addition, binds D-galactose and D-glucose and plays a role in the chemotaxis towards these two sugars by interacting with the Trg chemoreceptor. In Salmonella typhimurium (strain LT2 / SGSC1412 / ATCC 700720), this protein is D-galactose/methyl-galactoside binding periplasmic protein MglB (mglB).